A 688-amino-acid polypeptide reads, in one-letter code: UvrABC system protein B (688 aa).

The Helicase ATP-binding domain occupies 31-188 (GRVNAGEPDV…RKFVSMQYQR (158 aa)). 44 to 51 (GATGTGKS) is a binding site for ATP. The short motif at 97–120 (YYDYYQPEAYVPQTDTFIEKDSSV) is the Beta-hairpin element. In terms of domain architecture, Helicase C-terminal spans 434 to 587 (QIDDLLEQIR…QVAYNTEHGI (154 aa)). The segment at 607 to 632 (GEDTKKMLEGRGGGKRSPTPNLRREG) is disordered. The 36-residue stretch at 642–677 (ETIISDLNDQMLQAAGELKFELAARLRDELGDLKRE) folds into the UVR domain.

Belongs to the UvrB family. As to quaternary structure, forms a heterotetramer with UvrA during the search for lesions. Interacts with UvrC in an incision complex.

The protein localises to the cytoplasm. Functionally, the UvrABC repair system catalyzes the recognition and processing of DNA lesions. A damage recognition complex composed of 2 UvrA and 2 UvrB subunits scans DNA for abnormalities. Upon binding of the UvrA(2)B(2) complex to a putative damaged site, the DNA wraps around one UvrB monomer. DNA wrap is dependent on ATP binding by UvrB and probably causes local melting of the DNA helix, facilitating insertion of UvrB beta-hairpin between the DNA strands. Then UvrB probes one DNA strand for the presence of a lesion. If a lesion is found the UvrA subunits dissociate and the UvrB-DNA preincision complex is formed. This complex is subsequently bound by UvrC and the second UvrB is released. If no lesion is found, the DNA wraps around the other UvrB subunit that will check the other stand for damage. The sequence is that of UvrABC system protein B from Clavibacter michiganensis subsp. michiganensis (strain NCPPB 382).